A 507-amino-acid polypeptide reads, in one-letter code: ATP synthase subunit alpha, chloroplastic (507 aa).

Position 170 to 177 (170 to 177 (GDRQTGKT)) interacts with ATP.

The protein belongs to the ATPase alpha/beta chains family. As to quaternary structure, F-type ATPases have 2 components, CF(1) - the catalytic core - and CF(0) - the membrane proton channel. CF(1) has five subunits: alpha(3), beta(3), gamma(1), delta(1), epsilon(1). CF(0) has four main subunits: a, b, b' and c.

The protein resides in the plastid. It localises to the chloroplast thylakoid membrane. The enzyme catalyses ATP + H2O + 4 H(+)(in) = ADP + phosphate + 5 H(+)(out). Produces ATP from ADP in the presence of a proton gradient across the membrane. The alpha chain is a regulatory subunit. The polypeptide is ATP synthase subunit alpha, chloroplastic (Nicotiana tomentosiformis (Tobacco)).